Reading from the N-terminus, the 278-residue chain is TIMELESS-interacting protein (278 aa).

Residues 1 to 59 are disordered; it reads MLEQEENGLFEIPDYEHVEDETFPPFPPPASPERDPADAEPEEGSGSGVPVPPKRTVKR. The segment at 64–140 is interaction with TIMELESS; sequence LDATRLTSER…KEVQTCLKRI (77 aa). Disordered regions lie at residues 155-197 and 216-278; these read NDEV…EEQQ and LSNS…TNLD. Phosphoserine occurs at positions 191 and 219. Over residues 226-239 the composition is skewed to acidic residues; that stretch reads VTVEENSTGEDQEE. T233 carries the phosphothreonine modification. Over residues 259–278 the composition is skewed to basic and acidic residues; it reads THEEEQCKAEETQLDHTNLD.

Belongs to the CSM3 family. As to quaternary structure, interacts with MCM6 and MCM7. Interacts with TIMELESS (via N-terminus), which impairs TIMELESS self-association. Interacts with RPA2 and PRDX2. As to expression, expressed in brain.

The protein resides in the cytoplasm. The protein localises to the nucleus. Plays an important role in the control of DNA replication and the maintenance of replication fork stability. Important for cell survival after DNA damage or replication stress. May be specifically required for the ATR-CHEK1 pathway in the replication checkpoint induced by hydroxyurea or ultraviolet light. Forms a complex with TIMELESS and this complex regulates DNA replication processes under both normal and stress conditions, stabilizes replication forks and influences both CHEK1 phosphorylation and the intra-S phase checkpoint in response to genotoxic stress. The chain is TIMELESS-interacting protein (Tipin) from Mus musculus (Mouse).